Here is a 166-residue protein sequence, read N- to C-terminus: Regulator of ribonuclease activity A (166 aa).

This sequence belongs to the RraA family. In terms of assembly, homotrimer. Binds to both RNA-binding sites in the C-terminal region of Rne and to RhlB.

The protein localises to the cytoplasm. Functionally, globally modulates RNA abundance by binding to RNase E (Rne) and regulating its endonucleolytic activity. Can modulate Rne action in a substrate-dependent manner by altering the composition of the degradosome. Modulates RNA-binding and helicase activities of the degradosome. This Histophilus somni (strain 129Pt) (Haemophilus somnus) protein is Regulator of ribonuclease activity A.